Reading from the N-terminus, the 174-residue chain is Interferon gamma (174 aa).

Residues M1 to G23 form the signal peptide. Q24 bears the Pyrrolidone carboxylic acid mark. N-linked (GlcNAc...) asparagine glycosylation is found at N39 and N106.

Belongs to the type II (or gamma) interferon family. As to quaternary structure, homodimer. Interacts with IFNGR1 (via extracellular domain); this interaction promotes IFNGR1 dimerization. Released primarily from activated T lymphocytes.

It is found in the secreted. Type II interferon produced by immune cells such as T-cells and NK cells that plays crucial roles in antimicrobial, antiviral, and antitumor responses by activating effector immune cells and enhancing antigen presentation. Primarily signals through the JAK-STAT pathway after interaction with its receptor IFNGR1 to affect gene regulation. Upon IFNG binding, IFNGR1 intracellular domain opens out to allow association of downstream signaling components JAK2, JAK1 and STAT1, leading to STAT1 activation, nuclear translocation and transcription of IFNG-regulated genes. Many of the induced genes are transcription factors such as IRF1 that are able to further drive regulation of a next wave of transcription. Plays a role in class I antigen presentation pathway by inducing a replacement of catalytic proteasome subunits with immunoproteasome subunits. In turn, increases the quantity, quality, and repertoire of peptides for class I MHC loading. Increases the efficiency of peptide generation also by inducing the expression of activator PA28 that associates with the proteasome and alters its proteolytic cleavage preference. Up-regulates as well MHC II complexes on the cell surface by promoting expression of several key molecules such as cathepsins B/CTSB, H/CTSH, and L/CTSL. Participates in the regulation of hematopoietic stem cells during development and under homeostatic conditions by affecting their development, quiescence, and differentiation. This is Interferon gamma (IFNG) from Phodopus sungorus (Striped hairy-footed hamster).